Reading from the N-terminus, the 87-residue chain is Small ribosomal subunit protein bS18 (87 aa).

Belongs to the bacterial ribosomal protein bS18 family. As to quaternary structure, part of the 30S ribosomal subunit. Forms a tight heterodimer with protein bS6.

In terms of biological role, binds as a heterodimer with protein bS6 to the central domain of the 16S rRNA, where it helps stabilize the platform of the 30S subunit. The protein is Small ribosomal subunit protein bS18 of Nitratidesulfovibrio vulgaris (strain DSM 19637 / Miyazaki F) (Desulfovibrio vulgaris).